A 389-amino-acid chain; its full sequence is S-adenosylmethionine synthase (389 aa).

Histidine 17 lines the ATP pocket. Aspartate 19 provides a ligand contact to Mg(2+). Glutamate 45 lines the K(+) pocket. The L-methionine site is built by glutamate 58 and glutamine 101. The segment at 101 to 111 is flexible loop; the sequence is QSPDIGQGVDV. Residues 160-162, 226-227, aspartate 235, 241-242, alanine 258, and lysine 262 each bind ATP; these read DGK, RF, and RK. Position 235 (aspartate 235) interacts with L-methionine. Lysine 266 lines the L-methionine pocket.

This sequence belongs to the AdoMet synthase family. Homotetramer; dimer of dimers. It depends on Mg(2+) as a cofactor. Requires K(+) as cofactor.

It is found in the cytoplasm. It carries out the reaction L-methionine + ATP + H2O = S-adenosyl-L-methionine + phosphate + diphosphate. The protein operates within amino-acid biosynthesis; S-adenosyl-L-methionine biosynthesis; S-adenosyl-L-methionine from L-methionine: step 1/1. Functionally, catalyzes the formation of S-adenosylmethionine (AdoMet) from methionine and ATP. The overall synthetic reaction is composed of two sequential steps, AdoMet formation and the subsequent tripolyphosphate hydrolysis which occurs prior to release of AdoMet from the enzyme. This chain is S-adenosylmethionine synthase, found in Anaeromyxobacter sp. (strain Fw109-5).